We begin with the raw amino-acid sequence, 328 residues long: Malate dehydrogenase (328 aa).

12–18 is an NAD(+) binding site; that stretch reads GAAGQIG. Substrate-binding residues include arginine 95 and arginine 101. Residues asparagine 108, glutamine 115, and 132-134 each bind NAD(+); that span reads VGN. Asparagine 134 and arginine 165 together coordinate substrate. Catalysis depends on histidine 190, which acts as the Proton acceptor.

The protein belongs to the LDH/MDH superfamily. MDH type 2 family.

The catalysed reaction is (S)-malate + NAD(+) = oxaloacetate + NADH + H(+). Its function is as follows. Catalyzes the reversible oxidation of malate to oxaloacetate. The chain is Malate dehydrogenase from Leptothrix cholodnii (strain ATCC 51168 / LMG 8142 / SP-6) (Leptothrix discophora (strain SP-6)).